Reading from the N-terminus, the 179-residue chain is ATP synthase subunit b (179 aa).

A helical transmembrane segment spans residues 23–43; sequence IFWLIITFGILYVVLSKLILP.

Belongs to the ATPase B chain family. F-type ATPases have 2 components, F(1) - the catalytic core - and F(0) - the membrane proton channel. F(1) has five subunits: alpha(3), beta(3), gamma(1), delta(1), epsilon(1). F(0) has three main subunits: a(1), b(2) and c(10-14). The alpha and beta chains form an alternating ring which encloses part of the gamma chain. F(1) is attached to F(0) by a central stalk formed by the gamma and epsilon chains, while a peripheral stalk is formed by the delta and b chains.

Its subcellular location is the cell inner membrane. Functionally, f(1)F(0) ATP synthase produces ATP from ADP in the presence of a proton or sodium gradient. F-type ATPases consist of two structural domains, F(1) containing the extramembraneous catalytic core and F(0) containing the membrane proton channel, linked together by a central stalk and a peripheral stalk. During catalysis, ATP synthesis in the catalytic domain of F(1) is coupled via a rotary mechanism of the central stalk subunits to proton translocation. In terms of biological role, component of the F(0) channel, it forms part of the peripheral stalk, linking F(1) to F(0). This Pelagibacter ubique (strain HTCC1062) protein is ATP synthase subunit b.